Consider the following 666-residue polypeptide: Neurexin-2-beta (666 aa).

Residues 1-10 (MPPGGSGPGG) show a composition bias toward gly residues. Residues 1 to 30 (MPPGGSGPGGCPRRPPALAGPLPPPPPPPP) form a disordered region. Positions 1–50 (MPPGGSGPGGCPRRPPALAGPLPPPPPPPPPPLLPLLPLLLLLLLGAAEG) are cleaved as a signal peptide. Positions 21–30 (PLPPPPPPPP) are enriched in pro residues. The Extracellular segment spans residues 51-590 (ARVSSSLSTT…EVIRESSSTT (540 aa)). In terms of domain architecture, Laminin G-like spans 91–299 (TTYIFGKGGA…HLRLVGEGPS (209 aa)). Residues D143 and V160 each contribute to the Ca(2+) site. N-linked (GlcNAc...) asparagine glycosylation occurs at N190. The Ca(2+) site is built by I242 and N244. The tract at residues 327 to 346 (ATTTTRRGRSPTLRDSTTQN) is disordered. S354 carries an O-linked (Xyl...) (heparan sulfate) serine glycan. 2 disordered regions span residues 412–443 (ATQD…CEEP) and 479–580 (TLLS…PGAV). A helical membrane pass occupies residues 591–611 (GMVVGIVAAAALCILILLYAM). Residues 612–666 (YKYRNRDEGSYQVDQSRNYISNSAQSNGAVVKEKAPAAPKTPSKAKKNKDKEYYV) are Cytoplasmic-facing. The segment at 633–666 (NSAQSNGAVVKEKAPAAPKTPSKAKKNKDKEYYV) is disordered.

The protein belongs to the neurexin family. In terms of assembly, interacts (via cytoplasmic C-terminal region) with CASK. Specific isoforms bind alpha-dystroglycan and neuroligins NLGN1, NLGN2 and NLGN3. Interacts with CBLN1, CBLN2 and, less avidly, with CBLN4. Interacts with CLSTN3. O-glycosylated; contains heparan sulfate. Heparan sulfate attachment is required for synapse development by mediating interactions with neuroligins.

It localises to the presynaptic cell membrane. Functionally, neuronal cell surface protein that may be involved in cell recognition and cell adhesion. The protein is Neurexin-2-beta (NRXN2) of Homo sapiens (Human).